Consider the following 89-residue polypeptide: Phytosulfokines 1 (89 aa).

Positions 1 to 22 (MVNPGRTARALCLLCLALLLLG) are cleaved as a signal peptide. Positions 23-79 (QDTHSRKLLLQEKHSHGVGNGTTTTQEPSRENGGSTGSNNNGQLQFDSAKWEEFHTD) are excised as a propeptide. Residues 33 to 70 (QEKHSHGVGNGTTTTQEPSRENGGSTGSNNNGQLQFDS) are disordered. N-linked (GlcNAc...) asparagine glycosylation is present at N42. Residues Y80 and Y82 each carry the sulfotyrosine modification. Positions 85–89 (DVKKP) are excised as a propeptide.

It belongs to the phytosulfokine family. Post-translationally, sulfation is important for activity and for the binding to a putative membrane receptor. PSK-alpha is produced by endopeptidase digestion. PSK-beta is produced from PSK-alpha by exopeptidase digestion. As to expression, expressed throughout the seedling. More abundant in fragments containing shoot or root apexes where cells proliferate vigorously.

It localises to the secreted. Functionally, promotes plant cell differentiation, organogenesis and somatic embryogenesis as well as cell proliferation. This chain is Phytosulfokines 1 (PSK1), found in Oryza sativa subsp. japonica (Rice).